The sequence spans 320 residues: o-succinylbenzoate synthase (320 aa).

The active-site Proton donor is lysine 133. 3 residues coordinate Mg(2+): aspartate 161, glutamate 190, and aspartate 213. Lysine 235 (proton acceptor) is an active-site residue.

This sequence belongs to the mandelate racemase/muconate lactonizing enzyme family. MenC type 1 subfamily. A divalent metal cation serves as cofactor.

The catalysed reaction is (1R,6R)-6-hydroxy-2-succinyl-cyclohexa-2,4-diene-1-carboxylate = 2-succinylbenzoate + H2O. The protein operates within quinol/quinone metabolism; 1,4-dihydroxy-2-naphthoate biosynthesis; 1,4-dihydroxy-2-naphthoate from chorismate: step 4/7. It functions in the pathway quinol/quinone metabolism; menaquinone biosynthesis. Functionally, converts 2-succinyl-6-hydroxy-2,4-cyclohexadiene-1-carboxylate (SHCHC) to 2-succinylbenzoate (OSB). The chain is o-succinylbenzoate synthase from Escherichia coli O6:K15:H31 (strain 536 / UPEC).